Consider the following 247-residue polypeptide: HTH-type transcriptional regulator SarU (247 aa).

2 DNA-binding regions (H-T-H motif) span residues 53 to 76 (LKEI…SLSK) and 178 to 201 (LKDL…RLNN).

The protein belongs to the SarA family.

It is found in the cytoplasm. In terms of biological role, positive regulator of RNAII and RNAIII in a cell density-dependent manner. It can contribute to the expression of virulence genes controlled by agr. May also regulate target genes via an agr-independent pathway. The sequence is that of HTH-type transcriptional regulator SarU (sarU) from Staphylococcus aureus (strain NCTC 8325 / PS 47).